Consider the following 389-residue polypeptide: Chalcone synthase 4-2 (389 aa).

Cysteine 164 is a catalytic residue.

It belongs to the thiolase-like superfamily. Chalcone/stilbene synthases family.

It carries out the reaction (E)-4-coumaroyl-CoA + 3 malonyl-CoA + 3 H(+) = 2',4,4',6'-tetrahydroxychalcone + 3 CO2 + 4 CoA. The protein operates within secondary metabolite biosynthesis; flavonoid biosynthesis. In terms of biological role, the primary product of this enzyme is 4,2',4',6'-tetrahydroxychalcone (also termed naringenin-chalcone or chalcone) which can under specific conditions spontaneously isomerize into naringenin. The chain is Chalcone synthase 4-2 (CHS4-2) from Medicago sativa (Alfalfa).